Reading from the N-terminus, the 52-residue chain is Large ribosomal subunit protein bL33 (52 aa).

It belongs to the bacterial ribosomal protein bL33 family.

This Chlamydia abortus (strain DSM 27085 / S26/3) (Chlamydophila abortus) protein is Large ribosomal subunit protein bL33.